Reading from the N-terminus, the 334-residue chain is Glycerol-1-phosphate dehydrogenase [NAD(P)+] (334 aa).

NAD(+) is bound by residues 77 to 81 (GRPID) and 99 to 102 (TTAS). Asp-104 contributes to the substrate binding site. Ser-108 is a binding site for NAD(+). Asp-147 contributes to the substrate binding site. The Zn(2+) site is built by Asp-147 and His-225. His-229 contacts substrate. His-246 provides a ligand contact to Zn(2+).

This sequence belongs to the glycerol-1-phosphate dehydrogenase family. Requires Zn(2+) as cofactor.

It is found in the cytoplasm. The catalysed reaction is sn-glycerol 1-phosphate + NAD(+) = dihydroxyacetone phosphate + NADH + H(+). The enzyme catalyses sn-glycerol 1-phosphate + NADP(+) = dihydroxyacetone phosphate + NADPH + H(+). It participates in membrane lipid metabolism; glycerophospholipid metabolism. Functionally, catalyzes the NAD(P)H-dependent reduction of dihydroxyacetonephosphate (DHAP or glycerone phosphate) to glycerol 1-phosphate (G1P). The G1P thus generated is used as the glycerophosphate backbone of phospholipids in the cellular membranes of Archaea. This is Glycerol-1-phosphate dehydrogenase [NAD(P)+] from Methanococcus maripaludis (strain C7 / ATCC BAA-1331).